The sequence spans 105 residues: Heat shock protein HspQ (105 aa).

The tract at residues 76–105 (EMRDEHPEQPSMDELARTIRKQLQAPRLRN) is disordered.

Belongs to the HspQ family.

It is found in the cytoplasm. Involved in the degradation of certain denaturated proteins, including DnaA, during heat shock stress. The sequence is that of Heat shock protein HspQ from Salmonella agona (strain SL483).